We begin with the raw amino-acid sequence, 91 residues long: Sec-independent protein translocase protein TatA (91 aa).

A helical membrane pass occupies residues 1–21; it reads MGSMSVWHWVIVAVVVMLLFG. The tract at residues 42-91 is disordered; sequence GMADDETQPTNTTSVPPVGPNDPVRTLPHQGAPGTAPQQTHVPAGDHKAV.

The protein belongs to the TatA/E family. The Tat system comprises two distinct complexes: a TatABC complex, containing multiple copies of TatA, TatB and TatC subunits, and a separate TatA complex, containing only TatA subunits. Substrates initially bind to the TatABC complex, which probably triggers association of the separate TatA complex to form the active translocon.

Its subcellular location is the cell inner membrane. In terms of biological role, part of the twin-arginine translocation (Tat) system that transports large folded proteins containing a characteristic twin-arginine motif in their signal peptide across membranes. TatA could form the protein-conducting channel of the Tat system. The chain is Sec-independent protein translocase protein TatA from Methylorubrum populi (strain ATCC BAA-705 / NCIMB 13946 / BJ001) (Methylobacterium populi).